Consider the following 263-residue polypeptide: Stress-response A/B barrel domain-containing protein UP3 (263 aa).

Stress-response A/B barrel domains are found at residues 49 to 142 and 158 to 252; these read IEHI…AVDW and VAKL…VVEF. The short motif at 261–263 is the Peroxisomal targeting signal element; sequence SSL.

In terms of assembly, homodimer.

The protein localises to the peroxisome. In terms of biological role, involved in stress response. This Arabidopsis thaliana (Mouse-ear cress) protein is Stress-response A/B barrel domain-containing protein UP3.